Consider the following 345-residue polypeptide: Cell division control protein 2 homolog 2 (345 aa).

The tract at residues 1 to 44 is disordered; that stretch reads MQVQVQEGQTACDGSLRPLPSAGPASFVPRSLRPAPLRGTSTPD. The region spanning 46 to 328 is the Protein kinase domain; sequence YSRIEKVGEG…AYEALQHSYF (283 aa). Residues 52–60 and Lys75 contribute to the ATP site; that span reads VGEGSYGIV. Phosphoserine is present on Ser56. A Phosphotyrosine modification is found at Tyr57. Asp168 serves as the catalytic Proton acceptor.

It belongs to the protein kinase superfamily. CMGC Ser/Thr protein kinase family. CDC2/CDKX subfamily. In terms of assembly, forms a stable but non-covalent complex with a regulatory subunit and with a cyclin.

It catalyses the reaction L-seryl-[protein] + ATP = O-phospho-L-seryl-[protein] + ADP + H(+). It carries out the reaction L-threonyl-[protein] + ATP = O-phospho-L-threonyl-[protein] + ADP + H(+). Its activity is regulated as follows. Phosphorylation at Ser-56 or Tyr-57 inactivates the enzyme. Probably involved in the control of the cell cycle. This Trypanosoma brucei brucei protein is Cell division control protein 2 homolog 2 (CRK2).